The following is a 184-amino-acid chain: Probable RNA 2'-phosphotransferase (184 aa).

Belongs to the KptA/TPT1 family.

In terms of biological role, removes the 2'-phosphate from RNA via an intermediate in which the phosphate is ADP-ribosylated by NAD followed by a presumed transesterification to release the RNA and generate ADP-ribose 1''-2''-cyclic phosphate (APPR&gt;P). May function as an ADP-ribosylase. In Rhodopirellula baltica (strain DSM 10527 / NCIMB 13988 / SH1), this protein is Probable RNA 2'-phosphotransferase.